Consider the following 300-residue polypeptide: tRNA dimethylallyltransferase 1 (300 aa).

13–20 lines the ATP pocket; that stretch reads GPTGVGKT. Position 15-20 (15-20) interacts with substrate; that stretch reads TGVGKT. The segment at 38-41 is interaction with substrate tRNA; sequence DSRQ.

It belongs to the IPP transferase family. Monomer. Mg(2+) serves as cofactor.

It carries out the reaction adenosine(37) in tRNA + dimethylallyl diphosphate = N(6)-dimethylallyladenosine(37) in tRNA + diphosphate. In terms of biological role, catalyzes the transfer of a dimethylallyl group onto the adenine at position 37 in tRNAs that read codons beginning with uridine, leading to the formation of N6-(dimethylallyl)adenosine (i(6)A). This Porphyromonas gingivalis (strain ATCC BAA-308 / W83) protein is tRNA dimethylallyltransferase 1.